A 314-amino-acid chain; its full sequence is Olfactory receptor 5D14 (314 aa).

The Extracellular portion of the chain corresponds to M1–I27. Residue N7 is glycosylated (N-linked (GlcNAc...) asparagine). Residues P28–I48 form a helical membrane-spanning segment. Residues I49–K56 are Cytoplasmic-facing. Residues F57 to S77 traverse the membrane as a helical segment. Over I78–M101 the chain is Extracellular. The chain crosses the membrane as a helical span at residues Q102–Y122. At D123–R141 the chain is on the cytoplasmic side. The chain crosses the membrane as a helical span at residues L142–L162. The Extracellular portion of the chain corresponds to C163 to H198. N-linked (GlcNAc...) asparagine glycosylation occurs at N169. Residues L199–S219 form a helical membrane-spanning segment. Topologically, residues Y220 to A239 are cytoplasmic. A helical membrane pass occupies residues F240–L260. Topologically, residues Y261 to V273 are extracellular. A helical transmembrane segment spans residues K274 to L294. Residues R295 to H314 lie on the Cytoplasmic side of the membrane.

It belongs to the G-protein coupled receptor 1 family.

It is found in the cell membrane. Functionally, odorant receptor. The protein is Olfactory receptor 5D14 (OR5D14) of Homo sapiens (Human).